A 411-amino-acid chain; its full sequence is Adenylosuccinate synthetase (411 aa).

GTP is bound by residues 11-17 (GDEGKGK) and 39-41 (GHT). Asp12 acts as the Proton acceptor in catalysis. Residues Asp12 and Gly39 each coordinate Mg(2+). Residues 12-15 (DEGK), 37-40 (NAGH), Thr121, Arg135, Gln215, Thr230, and Arg294 each bind IMP. The active-site Proton donor is His40. 290-296 (TTTKRPR) contacts substrate. GTP-binding positions include Arg296, 322–324 (KLD), and 400–402 (STS).

The protein belongs to the adenylosuccinate synthetase family. As to quaternary structure, homodimer. It depends on Mg(2+) as a cofactor.

It localises to the cytoplasm. The enzyme catalyses IMP + L-aspartate + GTP = N(6)-(1,2-dicarboxyethyl)-AMP + GDP + phosphate + 2 H(+). Its pathway is purine metabolism; AMP biosynthesis via de novo pathway; AMP from IMP: step 1/2. Plays an important role in the de novo pathway of purine nucleotide biosynthesis. Catalyzes the first committed step in the biosynthesis of AMP from IMP. In Helicobacter pylori (strain HPAG1), this protein is Adenylosuccinate synthetase.